Here is a 148-residue protein sequence, read N- to C-terminus: UPF0179 protein Mboo_1959 (148 aa).

It belongs to the UPF0179 family.

This chain is UPF0179 protein Mboo_1959, found in Methanoregula boonei (strain DSM 21154 / JCM 14090 / 6A8).